Reading from the N-terminus, the 575-residue chain is Putative diflavin flavoprotein A 4 (575 aa).

A zinc metallo-hydrolase region spans residues 41 to 234 (QRGTTANSYL…LGARSYAPGH (194 aa)). The Flavodoxin-like domain maps to 263-405 (VALLYTSAYG…AGATFAQTLK (143 aa)). Residues 429–575 (VGRIIGSLCV…AVEHRKSGSH (147 aa)) form a flavodoxin-reductase-like region.

It in the N-terminal section; belongs to the zinc metallo-hydrolase group 3 family. In the C-terminal section; belongs to the flavodoxin reductase family. It depends on Fe cation as a cofactor.

Its function is as follows. Mediates electron transfer from NADH to oxygen, reducing it to water. This modular protein has 3 redox cofactors, in other organisms the same activity requires 2 or 3 proteins. This is Putative diflavin flavoprotein A 4 (dfa4) from Nostoc sp. (strain PCC 7120 / SAG 25.82 / UTEX 2576).